The chain runs to 232 residues: Ornithine carbamoyltransferase (232 aa).

Carbamoyl phosphate-binding positions include Q15, R39, and H66–Q69. L-ornithine contacts are provided by residues N99, D163, and S167–M168. Residues H204–P207 and T232 contribute to the carbamoyl phosphate site.

It belongs to the aspartate/ornithine carbamoyltransferase superfamily. OTCase family.

The protein localises to the cytoplasm. It carries out the reaction carbamoyl phosphate + L-ornithine = L-citrulline + phosphate + H(+). The protein operates within amino-acid biosynthesis; L-arginine biosynthesis; L-arginine from L-ornithine and carbamoyl phosphate: step 1/3. The protein is Ornithine carbamoyltransferase (argF) of Neisseria animalis.